Reading from the N-terminus, the 2575-residue chain is Non-reducing polyketide synthase pks11 (2575 aa).

Residues 89 to 228 (LANIILSPLV…ASKTVSTLQG (140 aa)) form the Starter acyltransferase (SAT) domain. Catalysis depends on C129, which acts as the Nucleophile; for transacylase activity. H247 serves as the catalytic Proton donor/acceptor; for transacylase activity. A Ketosynthase family 3 (KS3) domain is found at 373-790 (EDDIAVVGMS…GSNASAVVTE (418 aa)). Catalysis depends on for beta-ketoacyl synthase activity residues C538, H673, and H713. The region spanning 901–1192 (FGGQISTYVG…TNMASRALGS (292 aa)) is the Malonyl-CoA:ACP transacylase (MAT) domain. The N-terminal hotdog fold stretch occupies residues 1276–1409 (PKGLWSFIDY…GQIIFVSTDN (134 aa)). A PKS/mFAS DH domain is found at 1276-1586 (PKGLWSFIDY…YHKVAKATMS (311 aa)). The tract at residues 1307–1584 (LVSGHIIAQT…VNYHKVAKAT (278 aa)) is product template (PT) domain. Residue H1311 is the Proton acceptor; for dehydratase activity of the active site. A C-terminal hotdog fold region spans residues 1437–1586 (ADDIIQGRNI…YHKVAKATMS (150 aa)). Catalysis depends on D1493, which acts as the Proton donor; for dehydratase activity. Residues 1597–1606 (TTSTSTNVKS) show a composition bias toward polar residues. The interval 1597–1636 (TTSTSTNVKSSPAAAEGSSPVENGASGSGSKAKKTKSGAG) is disordered. The Carrier domain occupies 1637 to 1711 (QDVVNKTKGL…GLVQIIKSTL (75 aa)). S1671 is modified (O-(pantetheine 4'-phosphoryl)serine). Positions 1713–1762 (VSDDEEGSDQEGSEASSSESSTTFTPSTTATTVSDVEDNGNEKSIGKEKS) are disordered. Over residues 1714–1724 (SDDEEGSDQEG) the composition is skewed to acidic residues. The span at 1725–1746 (SEASSSESSTTFTPSTTATTVS) shows a compositional bias: low complexity. Residues 1752-1762 (GNEKSIGKEKS) show a composition bias toward basic and acidic residues. The interval 1835–2130 (LTRIPHDPQH…HIDWTDGNSP (296 aa)) is methyltransferase domain. The 245-residue stretch at 2204–2448 (ITGATGSLGS…LCWTPVDDVA (245 aa)) folds into the Thioester reductase (TE) domain.

Pantetheine 4'-phosphate serves as cofactor.

It functions in the pathway secondary metabolite biosynthesis. Non-reducing polyketide synthase; part of the gene cluster that mediates the biosynthesis of mitorubrinol and mitorubrinic acid, two virulence factors that improve T.marneffei intracellular survival in macrophages. The two polyketide synthases pks12 and pks11 are probably responsible for sequential use in the biosynthesis of mitorubrinol and mitorubrinic acid. The first part of the biosynthesis is probably catalyzed by pks12, which synthesized orsellinic acid. This tetraketide is then used as a starter unit for pks11, which possesses a SAT domain, in the second part of the biosynthesis. Pks11, contains a methyltransferase domain, also served that methylates the products, using a methyl group from S-adenosylmethionine. The protein is Non-reducing polyketide synthase pks11 of Talaromyces marneffei (Penicillium marneffei).